The primary structure comprises 162 residues: Ribonuclease P protein component (162 aa).

The interval methionine 1–aspartate 67 is disordered. Over residues glycine 21–glycine 31 the composition is skewed to basic and acidic residues.

Belongs to the RnpA family. In terms of assembly, consists of a catalytic RNA component (M1 or rnpB) and a protein subunit.

The catalysed reaction is Endonucleolytic cleavage of RNA, removing 5'-extranucleotides from tRNA precursor.. RNaseP catalyzes the removal of the 5'-leader sequence from pre-tRNA to produce the mature 5'-terminus. It can also cleave other RNA substrates such as 4.5S RNA. The protein component plays an auxiliary but essential role in vivo by binding to the 5'-leader sequence and broadening the substrate specificity of the ribozyme. This Thermus brockianus protein is Ribonuclease P protein component.